The sequence spans 625 residues: METFSLKDCSSVASSPISSPNISTLLKIKVLSWSKETGLPASVHVRVCNKSFNLHKSLLCAKSGYFKEREDQLSEIEIPQEFPGGAETFEKIMLFIYGCPTLIHPFNIAGLRCAAQFLEMTEQHSTGNLCERFDLYLNQVVLQNWDDTLVVLKKCQDLVPWSEDLLIVSRCIESLAFTACMEILDPERRREKPVIMLEGMVNQPWEYTNIERIINQDTWIKDLTDLPFEFFKKIIGSLRRQGMKERYVSPLVALYASKSVIPEGQTNTDILQRALDLLLTRDKAYRFVPVGFYFACLAHNLKHDTVLKLQDQIVSLLHTAQPENFIYPKAGNRQVAFSQELLTMESLFSVYVSTESERHLTSSSSNVRVGKLWDIFLSRLPYDQEMKTTRFIELIETVPMSFRESHDQLYLAVNAFLQVHTNISQEEKGSICSYLNCQKLSQEASLELVKNEKMPLRLVVQALFIQQLNTHQAFKDCSDSFRFTNSADFSGSVVPSSRPLTSQQSPCTDDETGPRNRPLCFLMQKDATLDEFESTSFRIHNLEEQLVSLKKSLHSHDNLKKPNCLGKRSASRNKNTFGQVTTACIGSVSFTSQRKYANRLLQILRRVNLFGSRKTNRSKAGESER.

The region spanning 41–105 (ASVHVRVCNK…IYGCPTLIHP (65 aa)) is the BTB domain. The region spanning 217 to 469 (DTWIKDLTDL…VQALFIQQLN (253 aa)) is the NPH3 domain. The segment covering 494–507 (VPSSRPLTSQQSPC) has biased composition (polar residues). Residues 494 to 513 (VPSSRPLTSQQSPCTDDETG) form a disordered region.

The protein belongs to the NPH3 family.

It participates in protein modification; protein ubiquitination. In terms of biological role, may act as a substrate-specific adapter of an E3 ubiquitin-protein ligase complex (CUL3-RBX1-BTB) which mediates the ubiquitination and subsequent proteasomal degradation of target proteins. This chain is BTB/POZ domain-containing protein At5g48130, found in Arabidopsis thaliana (Mouse-ear cress).